Here is a 115-residue protein sequence, read N- to C-terminus: Autophagy-related protein 8i (115 aa).

Gly115 is lipidated: Phosphatidylethanolamine amidated glycine.

The protein belongs to the ATG8 family. Interacts with ATG4. Interacts with NBR1. Gly-115 forms then a thioester bond with the 'Cys-558' of ATG7 (E1-like activating enzyme) before being transferred to the 'Cys-258' of ATG3 (the specific E2 conjugating enzyme), in order to be finally amidated with phosphatidylethanolamine. This lipid modification anchors ATG8 to autophagosomes. In terms of tissue distribution, constitutively expressed.

It is found in the cytoplasmic vesicle. Its subcellular location is the autophagosome membrane. The protein localises to the vacuole membrane. It localises to the cytoplasm. The protein resides in the cytoskeleton. Ubiquitin-like modifier involved in autophagosomes formation. May mediate the delivery of the autophagosomes to the vacuole via the microtubule cytoskeleton. In Arabidopsis thaliana (Mouse-ear cress), this protein is Autophagy-related protein 8i (ATG8I).